A 394-amino-acid polypeptide reads, in one-letter code: HORMA domain-containing protein 1 (394 aa).

The region spanning 24–226 is the HORMA domain; sequence QQSLVLVKRL…TPFHTFKVKV (203 aa). A disordered region spans residues 306-394; sequence KESPELSISH…RKFSEPKEHI (89 aa). Positions 311–325 are enriched in polar residues; the sequence is LSISHSQVEQLVSKT. A compositionally biased stretch (basic and acidic residues) spans 353–362; the sequence is KSKESRKRSQ. Phosphoserine is present on Ser376. The Nuclear localization signal signature appears at 383–386; it reads KRRK.

In terms of assembly, interacts with HORMAD2. Interacts with IHO1. In terms of processing, phosphorylated at Ser-377 in a SPO11-dependent manner.

It localises to the nucleus. The protein resides in the chromosome. In terms of biological role, plays a key role in meiotic progression. Regulates 3 different functions during meiosis: ensures that sufficient numbers of processed DNA double-strand breaks (DSBs) are available for successful homology search by increasing the steady-state numbers of single-stranded DSB ends. Promotes synaptonemal-complex formation independently of its role in homology search. Plays a key role in the male mid-pachytene checkpoint and the female meiotic prophase checkpoint: required for efficient build-up of ATR activity on unsynapsed chromosome regions, a process believed to form the basis of meiotic silencing of unsynapsed chromatin (MSUC) and meiotic prophase quality control in both sexes. This Sus scrofa (Pig) protein is HORMA domain-containing protein 1 (HORMAD1).